A 245-amino-acid chain; its full sequence is tRNA (guanine-N(1)-)-methyltransferase (245 aa).

S-adenosyl-L-methionine is bound by residues G112 and 132–137 (IGDFVL).

It belongs to the RNA methyltransferase TrmD family. Homodimer.

It is found in the cytoplasm. The catalysed reaction is guanosine(37) in tRNA + S-adenosyl-L-methionine = N(1)-methylguanosine(37) in tRNA + S-adenosyl-L-homocysteine + H(+). Specifically methylates guanosine-37 in various tRNAs. The sequence is that of tRNA (guanine-N(1)-)-methyltransferase from Geobacter sulfurreducens (strain ATCC 51573 / DSM 12127 / PCA).